The chain runs to 679 residues: Methyl-accepting chemotaxis protein McpB (679 aa).

Divergent domain HAMP regions lie at residues 8–56, 63–112, and 111–156; these read AVAQ…RQLR, QQVE…AAHI, and HIAV…ERLR. The PAS domain occupies 171–213; the sequence is YNARIKSALDNVSANVMIADNDLNIIYMNRTVSEMLGRAEADI. Histidine 234 provides a ligand contact to heme. The DxT. Important for signal propagation motif lies at 285 to 287; that stretch reads DRT. The interval 289-332 is divergent domain HAMP 4; the sequence is EHRAEQEVSQLVQAAAAGDFSKRVEEAGKEGFFLRLAKDLNSLV. The 53-residue stretch at 333–385 folds into the HAMP 5 domain; the sequence is DTADRGLRDVSRMLGALAQGDLTQRIEADYQGTFGQLKDFSNDTAQSLSRMLG. Positions 390–619 constitute a Methyl-accepting transducer domain; that stretch reads AADTINTAAS…EAAAAAEAMQ (230 aa). 2 disordered regions span residues 405–425 and 644–679; these read NAEL…TASS and ASAR…WEEF. The span at 411–425 shows a compositional bias: polar residues; it reads RTEQQASSLEETASS. Residues 670–679 show a composition bias toward basic and acidic residues; that stretch reads ARKEDGWEEF. The GWEEF pentapeptide. Important for methylation by CheR2 signature appears at 675–679; sequence GWEEF.

This sequence belongs to the methyl-accepting chemotaxis (MCP) protein family. As to quaternary structure, homodimer. The PAS domains form dimers in the presence and absence of oxygen. Interacts with the methyltransferase CheR2 via the C-terminal McpB pentapeptide GWEEF. Interacts with the methylesterase/gutaminase CheB2, which also binds to the GWEEF pentapeptide. Post-translationally, methylated by CheR2, but not by CheR1, CheR3 or WspC. Demethylated by CheB2. In vitro, can be methylated by E.coli CheR.

It is found in the cytoplasm. In terms of biological role, chemoreceptor that plays a critical role in the virulence and pathogenesis of P.aeruginosa in a variety of hosts. Probably acts through oxygen sensing. Uses a heme-based sensor. Could be involved in chemotaxis. When expressed in E.coli, is able to sense and mediate repellent responses to oxygen, carbon monoxide and nitric oxide. This chain is Methyl-accepting chemotaxis protein McpB, found in Pseudomonas aeruginosa (strain ATCC 15692 / DSM 22644 / CIP 104116 / JCM 14847 / LMG 12228 / 1C / PRS 101 / PAO1).